The primary structure comprises 311 residues: Methionyl-tRNA formyltransferase (311 aa).

Residue 110–113 participates in (6S)-5,6,7,8-tetrahydrofolate binding; the sequence is SLLP.

It belongs to the Fmt family.

The enzyme catalyses L-methionyl-tRNA(fMet) + (6R)-10-formyltetrahydrofolate = N-formyl-L-methionyl-tRNA(fMet) + (6S)-5,6,7,8-tetrahydrofolate + H(+). Attaches a formyl group to the free amino group of methionyl-tRNA(fMet). The formyl group appears to play a dual role in the initiator identity of N-formylmethionyl-tRNA by promoting its recognition by IF2 and preventing the misappropriation of this tRNA by the elongation apparatus. In Streptococcus pneumoniae (strain JJA), this protein is Methionyl-tRNA formyltransferase.